The sequence spans 670 residues: MTSERKMLVTSALPYANGHLHLGHLVEHIQTDIWVRTHKMLGIQCISVCGDDAHGTPIMLKAEQLGITPEALTAEIKLSHEKDFKAFAIDYDYYHTTHSPENQVLATTIFERLQAGGDIVKKTIRQFYDPVKQMFLPDRYVKGTCPKCAAVDQYGDNCEVCGATYSPTDLINPVSVISGASPVEKESEHYFFDLPLYEELLKDWTRKGHLQAEVTNKLSEWFEAGLKQWDISRDAPYFGFPIPGVPDKYFYVWLDAPIGYMASFKKYCDERGVSFDEFWDKASKTELYHFVGKDIVYFHALFWPAMLAASGFRTPTAVYTHGFLTVEGQKMSKSRGTFIEARAYLAHLHPEYLRYYFAAKLNGRVDDLDLNFDDFVNRVNADLVGKVVNIASRCAGFINKRFDNRLSSELNDPKLHNDLLSARESVIDAFVSRDYARAIRQIMDCADKVNQYIDANKPWVLAKDESKLNEVHAICTMGINLFRILITYLKPVLPMMAKASEEFLNSEPLHWGSIDKPLLNHRINTFKPLMVRVEKEKIEAMLVQSKESLMTTPVKENTPVEDANLISIEDFAKVDLRIAKIVNAEPVEGADKLMRLILDLGDAQKQVFAGIKKAYDAEELIGRLTVMVANLEPRTMRFGVSEGMVLAAGDGQGIYLLQPDAGALPGMKVK.

The short motif at 14–24 (PYANGHLHLGH) is the 'HIGH' region element. Cys145, Cys148, Cys158, and Cys161 together coordinate Zn(2+). A 'KMSKS' region motif is present at residues 330-334 (KMSKS). Lys333 serves as a coordination point for ATP. Residues 570–670 (DFAKVDLRIA…AGALPGMKVK (101 aa)) form the tRNA-binding domain.

It belongs to the class-I aminoacyl-tRNA synthetase family. MetG type 1 subfamily. Homodimer. The cofactor is Zn(2+).

The protein localises to the cytoplasm. The enzyme catalyses tRNA(Met) + L-methionine + ATP = L-methionyl-tRNA(Met) + AMP + diphosphate. In terms of biological role, is required not only for elongation of protein synthesis but also for the initiation of all mRNA translation through initiator tRNA(fMet) aminoacylation. The polypeptide is Methionine--tRNA ligase (Legionella pneumophila (strain Paris)).